Consider the following 455-residue polypeptide: Bifunctional protein GlmU (455 aa).

A pyrophosphorylase region spans residues 1–226 (MSLDIVILAA…AMEVQGANDR (226 aa)). Residues 8 to 11 (LAAG), K22, Q73, 78 to 79 (GT), 99 to 101 (YGD), G136, E151, N166, and N224 contribute to the UDP-N-acetyl-alpha-D-glucosamine site. A Mg(2+)-binding site is contributed by D101. N224 is a Mg(2+) binding site. Residues 227–247 (KQLSELERHYQLREARRLMAA) form a linker region. Residues 248 to 455 (GVTLRDPSRF…WKRPVKITKD (208 aa)) form an N-acetyltransferase region. UDP-N-acetyl-alpha-D-glucosamine contacts are provided by R330 and K348. The active-site Proton acceptor is the H360. UDP-N-acetyl-alpha-D-glucosamine-binding residues include Y363 and N374. Acetyl-CoA-binding positions include A377, 383–384 (NY), S402, A420, and R437.

This sequence in the N-terminal section; belongs to the N-acetylglucosamine-1-phosphate uridyltransferase family. In the C-terminal section; belongs to the transferase hexapeptide repeat family. As to quaternary structure, homotrimer. Mg(2+) is required as a cofactor.

Its subcellular location is the cytoplasm. The catalysed reaction is alpha-D-glucosamine 1-phosphate + acetyl-CoA = N-acetyl-alpha-D-glucosamine 1-phosphate + CoA + H(+). It catalyses the reaction N-acetyl-alpha-D-glucosamine 1-phosphate + UTP + H(+) = UDP-N-acetyl-alpha-D-glucosamine + diphosphate. It functions in the pathway nucleotide-sugar biosynthesis; UDP-N-acetyl-alpha-D-glucosamine biosynthesis; N-acetyl-alpha-D-glucosamine 1-phosphate from alpha-D-glucosamine 6-phosphate (route II): step 2/2. The protein operates within nucleotide-sugar biosynthesis; UDP-N-acetyl-alpha-D-glucosamine biosynthesis; UDP-N-acetyl-alpha-D-glucosamine from N-acetyl-alpha-D-glucosamine 1-phosphate: step 1/1. It participates in bacterial outer membrane biogenesis; LPS lipid A biosynthesis. Catalyzes the last two sequential reactions in the de novo biosynthetic pathway for UDP-N-acetylglucosamine (UDP-GlcNAc). The C-terminal domain catalyzes the transfer of acetyl group from acetyl coenzyme A to glucosamine-1-phosphate (GlcN-1-P) to produce N-acetylglucosamine-1-phosphate (GlcNAc-1-P), which is converted into UDP-GlcNAc by the transfer of uridine 5-monophosphate (from uridine 5-triphosphate), a reaction catalyzed by the N-terminal domain. In Pseudomonas syringae pv. tomato (strain ATCC BAA-871 / DC3000), this protein is Bifunctional protein GlmU.